Reading from the N-terminus, the 734-residue chain is 1,4-alpha-glucan branching enzyme GlgB (734 aa).

Residue D413 is the Nucleophile of the active site. The Proton donor role is filled by E466.

This sequence belongs to the glycosyl hydrolase 13 family. GlgB subfamily. Monomer.

It carries out the reaction Transfers a segment of a (1-&gt;4)-alpha-D-glucan chain to a primary hydroxy group in a similar glucan chain.. The protein operates within glycan biosynthesis; glycogen biosynthesis. Its function is as follows. Catalyzes the formation of the alpha-1,6-glucosidic linkages in glycogen by scission of a 1,4-alpha-linked oligosaccharide from growing alpha-1,4-glucan chains and the subsequent attachment of the oligosaccharide to the alpha-1,6 position. The sequence is that of 1,4-alpha-glucan branching enzyme GlgB from Nitrosomonas europaea (strain ATCC 19718 / CIP 103999 / KCTC 2705 / NBRC 14298).